The primary structure comprises 295 residues: Small ribosomal subunit biogenesis GTPase RsgA (295 aa).

The CP-type G domain maps to 65 to 223 (KNQLVRPPVA…VLDTPGFTAL (159 aa)). GTP contacts are provided by residues 114-117 (NKVD) and 165-173 (GPSGVGKSS). Zn(2+)-binding residues include C246, C251, H253, and C259.

The protein belongs to the TRAFAC class YlqF/YawG GTPase family. RsgA subfamily. Monomer. Associates with 30S ribosomal subunit, binds 16S rRNA. Zn(2+) serves as cofactor.

It is found in the cytoplasm. Functionally, one of several proteins that assist in the late maturation steps of the functional core of the 30S ribosomal subunit. Helps release RbfA from mature subunits. May play a role in the assembly of ribosomal proteins into the subunit. Circularly permuted GTPase that catalyzes slow GTP hydrolysis, GTPase activity is stimulated by the 30S ribosomal subunit. The protein is Small ribosomal subunit biogenesis GTPase RsgA of Caldanaerobacter subterraneus subsp. tengcongensis (strain DSM 15242 / JCM 11007 / NBRC 100824 / MB4) (Thermoanaerobacter tengcongensis).